Here is a 275-residue protein sequence, read N- to C-terminus: NH(3)-dependent NAD(+) synthetase (275 aa).

Residue 50 to 57 coordinates ATP; sequence GISGGVDS. Asp56 provides a ligand contact to Mg(2+). Arg147 contributes to the deamido-NAD(+) binding site. An ATP-binding site is contributed by Thr167. Glu172 is a binding site for Mg(2+). Lys180 and Asp187 together coordinate deamido-NAD(+). Lys196 and Thr218 together coordinate ATP. 267–268 lines the deamido-NAD(+) pocket; that stretch reads HK.

It belongs to the NAD synthetase family. In terms of assembly, homodimer.

The enzyme catalyses deamido-NAD(+) + NH4(+) + ATP = AMP + diphosphate + NAD(+) + H(+). Its pathway is cofactor biosynthesis; NAD(+) biosynthesis; NAD(+) from deamido-NAD(+) (ammonia route): step 1/1. Functionally, catalyzes the ATP-dependent amidation of deamido-NAD to form NAD. Uses ammonia as a nitrogen source. This chain is NH(3)-dependent NAD(+) synthetase, found in Pseudomonas aeruginosa (strain UCBPP-PA14).